Reading from the N-terminus, the 686-residue chain is DNA gyrase subunit B (686 aa).

Positions 1–27 are enriched in polar residues; the sequence is MADSGNPNENNPSTDTGVNDAVSTSHG. Positions 1–29 are disordered; that stretch reads MADSGNPNENNPSTDTGVNDAVSTSHGDA. The Toprim domain occupies 465–579; that stretch reads CEIFIVEGDS…SGHVYLSRPP (115 aa). 3 residues coordinate Mg(2+): Glu-471, Asp-544, and Asp-546.

The protein belongs to the type II topoisomerase GyrB family. In terms of assembly, heterotetramer, composed of two GyrA and two GyrB chains. In the heterotetramer, GyrA contains the active site tyrosine that forms a transient covalent intermediate with DNA, while GyrB binds cofactors and catalyzes ATP hydrolysis. Mg(2+) is required as a cofactor. It depends on Mn(2+) as a cofactor. The cofactor is Ca(2+).

Its subcellular location is the cytoplasm. It carries out the reaction ATP-dependent breakage, passage and rejoining of double-stranded DNA.. A type II topoisomerase that negatively supercoils closed circular double-stranded (ds) DNA in an ATP-dependent manner to modulate DNA topology and maintain chromosomes in an underwound state. Negative supercoiling favors strand separation, and DNA replication, transcription, recombination and repair, all of which involve strand separation. Also able to catalyze the interconversion of other topological isomers of dsDNA rings, including catenanes and knotted rings. Type II topoisomerases break and join 2 DNA strands simultaneously in an ATP-dependent manner. The protein is DNA gyrase subunit B of Streptomyces coelicolor (strain ATCC BAA-471 / A3(2) / M145).